The following is a 304-amino-acid chain: Probable solute-binding protein AdeT1 (304 aa).

Belongs to the bacterial solute-binding protein 7 family.

In terms of biological role, mediates antimicrobial resistance via active efflux. Contributes to resistance to antibiotics such as chloramphenicol, erythromycin and novobiocin. May be part of a tripartite ATP-independent periplasmic (TRAP) transport system. The protein is Probable solute-binding protein AdeT1 of Acinetobacter baumannii.